A 114-amino-acid chain; its full sequence is Tyrosine-protein phosphatase 13 (114 aa).

Positions 1 to 114 (WRMLWEHNST…QFGQEGPITI (114 aa)) constitute a Tyrosine-protein phosphatase domain. E82 contacts substrate.

The protein belongs to the protein-tyrosine phosphatase family.

It catalyses the reaction O-phospho-L-tyrosyl-[protein] + H2O = L-tyrosyl-[protein] + phosphate. This Styela plicata (Wrinkled sea squirt) protein is Tyrosine-protein phosphatase 13 (STY-13).